The primary structure comprises 516 residues: Cysteine--tRNA ligase (516 aa).

Cysteine 34 contacts Zn(2+). Positions proline 36–asparagine 46 match the 'HIGH' region motif. Residues cysteine 225, histidine 250, and glutamate 254 each contribute to the Zn(2+) site. The 'KMSKS' region signature appears at lysine 285–serine 289. An ATP-binding site is contributed by lysine 288.

The protein belongs to the class-I aminoacyl-tRNA synthetase family. Monomer. Zn(2+) is required as a cofactor.

The protein localises to the cytoplasm. The enzyme catalyses tRNA(Cys) + L-cysteine + ATP = L-cysteinyl-tRNA(Cys) + AMP + diphosphate. The chain is Cysteine--tRNA ligase from Zymomonas mobilis subsp. mobilis (strain ATCC 31821 / ZM4 / CP4).